The chain runs to 181 residues: ADP-ribosylation factor-like protein 1 (181 aa).

A lipid anchor (N-myristoyl glycine) is attached at Gly2. GTP is bound by residues 24 to 31, 45 to 48, Gly70, 126 to 129, and 160 to 161; these read GLDGAGKT, TIPT, NKQD, and AT. Mg(2+) contacts are provided by Thr31 and Thr48.

This sequence belongs to the small GTPase superfamily. Arf family. The GTP-bound form interacts with GOLGA1. The GTP-bound form interacts with GOLGA4 and RGPD8. The GTP-bound form directly interacts with ARFIP2. Binds to SCOC, preferentially in its GTP-bound form. May interact with UNC119. Interacts with ARFIP1; this interaction directs ARFIP1 to the trans-Golgi membranes. Interacts with ARFGEF1 (via N-terminus).

It is found in the golgi apparatus membrane. It localises to the golgi apparatus. The protein localises to the trans-Golgi network membrane. Its subcellular location is the membrane. GTP-binding protein that recruits several effectors, such as golgins, arfaptins and Arf-GEFs to the trans-Golgi network, and modulates their functions at the Golgi complex. Plays thereby a role in a wide range of fundamental cellular processes, including cell polarity, innate immunity, or protein secretion mediated by arfaptins, which were shown to play a role in maintaining insulin secretion from pancreatic beta cells. This is ADP-ribosylation factor-like protein 1 (ARL1) from Bos taurus (Bovine).